Reading from the N-terminus, the 183-residue chain is MTKQPEDWLDDVPGDDIEDEDDEIIWVSKSEIKRDAEELKRLGAEIVDLGKNALDKIPLDADLRAAIELAQRIKMEGRRRQLQLIGKMLRQRDVEPIRQALDKLKNRHNQQVVLFHKLENLRDRLIDQGDDAIAEVLNLWPDADRQQLRTLIRNAKKEKEGNKPPKSARQIFQYLRELAENEG.

The protein belongs to the DarP family.

The protein resides in the cytoplasm. Member of a network of 50S ribosomal subunit biogenesis factors which assembles along the 30S-50S interface, preventing incorrect 23S rRNA structures from forming. Promotes peptidyl transferase center (PTC) maturation. This is Dual-action ribosomal maturation protein DarP from Escherichia coli O81 (strain ED1a).